A 381-amino-acid chain; its full sequence is Sulfate adenylyltransferase (381 aa).

This sequence belongs to the sulfate adenylyltransferase family.

It catalyses the reaction sulfate + ATP + H(+) = adenosine 5'-phosphosulfate + diphosphate. Its pathway is sulfur metabolism; hydrogen sulfide biosynthesis; sulfite from sulfate: step 1/3. This is Sulfate adenylyltransferase from Carboxydothermus hydrogenoformans (strain ATCC BAA-161 / DSM 6008 / Z-2901).